The sequence spans 1025 residues: Putative calcium-transporting ATPase 11, plasma membrane-type (1025 aa).

At 1-157 the chain is on the cytoplasmic side; sequence MSNLLKDFEV…NRYTEKPARS (157 aa). Positions 19–30 are interaction with calmodulin; it reads ARQRWRSSVGLV. A helical transmembrane segment spans residues 158–178; sequence FLTFVWEALQDITLIILMVCA. Residues 179 to 196 lie on the Lumenal side of the membrane; the sequence is VVSIGVGVATEGFPKGMY. Residues 197–217 form a helical membrane-spanning segment; sequence DGTGILLSIILVVMVTAISDY. Residues 218–345 lie on the Cytoplasmic side of the membrane; the sequence is KQSLQFRDLD…EDETPLQVKL (128 aa). Residues 346-365 traverse the membrane as a helical segment; the sequence is NGVATIIGKIGLGFAVLTFV. Residues 366 to 395 lie on the Lumenal side of the membrane; it reads VLCIRFVVEKATAGSITEWSSEDALTLLDY. The helical transmembrane segment at 396-413 threads the bilayer; that stretch reads FAIAVTIIVVAVPEGLPL. The Cytoplasmic portion of the chain corresponds to 414–801; the sequence is AVTLSLAFAM…KWGRAVYINI (388 aa). The active-site 4-aspartylphosphate intermediate is aspartate 451. Mg(2+) contacts are provided by aspartate 746 and aspartate 750. A helical transmembrane segment spans residues 802-820; it reads QKFVQFQLTVNVVALIINF. The Lumenal segment spans residues 821-831; the sequence is VSACITGSAPL. The helical transmembrane segment at 832 to 852 threads the bilayer; the sequence is TAVQLLWVNMIMDTLGALALA. The Cytoplasmic segment spans residues 853–872; that stretch reads TEPPNEGLMKRQPIGRTASF. Residues 873-895 traverse the membrane as a helical segment; sequence ITRAMWRNIIGQSIYQLIVLGIL. Topologically, residues 896-907 are lumenal; that stretch reads NFAGKQILNLNG. The chain crosses the membrane as a helical span at residues 908–929; sequence PDSTIVLNTIIFNSFVFCQVFN. The Cytoplasmic portion of the chain corresponds to 930–947; it reads EVNSREIEKINVFEGMFK. A helical transmembrane segment spans residues 948–969; the sequence is SWVFVAVMTATVGFQVIIVEFL. Residues 970-979 are Lumenal-facing; sequence GAFASTVPLS. Residues 980–1001 traverse the membrane as a helical segment; that stretch reads WQHWLLCILIGSVSMILAVGLK. The Cytoplasmic segment spans residues 1002-1025; it reads CIPVESNRHHDGYELLPSGPSDSA.

Belongs to the cation transport ATPase (P-type) (TC 3.A.3) family. Type IIB subfamily.

It is found in the membrane. It carries out the reaction Ca(2+)(in) + ATP + H2O = Ca(2+)(out) + ADP + phosphate + H(+). Its activity is regulated as follows. Activated by calmodulin. Functionally, this magnesium-dependent enzyme catalyzes the hydrolysis of ATP coupled with the translocation of calcium from the cytosol out of the cell or into organelles. The polypeptide is Putative calcium-transporting ATPase 11, plasma membrane-type (ACA11) (Arabidopsis thaliana (Mouse-ear cress)).